The primary structure comprises 498 residues: Probable malate:quinone oxidoreductase 2 (498 aa).

It belongs to the MQO family. Requires FAD as cofactor.

It carries out the reaction (S)-malate + a quinone = a quinol + oxaloacetate. It participates in carbohydrate metabolism; tricarboxylic acid cycle; oxaloacetate from (S)-malate (quinone route): step 1/1. In Staphylococcus aureus (strain COL), this protein is Probable malate:quinone oxidoreductase 2.